Here is a 356-residue protein sequence, read N- to C-terminus: C-C chemokine receptor type 8 (356 aa).

Residues 1–35 lie on the Extracellular side of the membrane; sequence MDYTLDPSMTTMTDYYYPDSLSSPCDGELIQRNDK. A helical membrane pass occupies residues 36-63; it reads LLLAVFYCLLFVFSLLGNSLVILVLVVC. Topologically, residues 64–73 are cytoplasmic; the sequence is KKLRNITDIY. The helical transmembrane segment at 74–93 threads the bilayer; the sequence is LLNLALSDLLFVFSFPFQTY. Over 94–107 the chain is Extracellular; the sequence is YQLDQWVFGTVMCK. Cys106 and Cys184 form a disulfide bridge. The chain crosses the membrane as a helical span at residues 108-129; it reads VVSGFYYIGFYSSMFFITLMSV. Residues 130 to 146 lie on the Cytoplasmic side of the membrane; it reads DRYLAVVHAVYAIKVRT. A helical membrane pass occupies residues 147-172; sequence IRMGTTTLSLLVWLTAIMATIPLLVF. Topologically, residues 173–203 are extracellular; sequence YQVASEDGVLQCYSFYNQQTLKWKIFTNFEM. The chain crosses the membrane as a helical span at residues 204–223; that stretch reads NILGLLIPFTIFMFCYIKIL. Over 224–239 the chain is Cytoplasmic; it reads HQLKRCQNHNKTKAIR. The chain crosses the membrane as a helical span at residues 240-264; sequence LVLIVVIASLLFWVPFNVVLFLTSL. At 265–281 the chain is on the extracellular side; the sequence is HSMHILDGCSISQQLNY. A helical transmembrane segment spans residues 282–305; sequence ATHVTEIISFTHCCVNPVIYAFVG. The Cytoplasmic portion of the chain corresponds to 306–356; the sequence is EKFKKHLSEIFQKSCSHIFIYLGRQMPRESCEKSSSCQQHSFRSSSIDYIL.

This sequence belongs to the G-protein coupled receptor 1 family.

It is found in the cell membrane. Functionally, receptor for the chemokines CCL1/SCYA1/I-309. May regulate monocyte chemotaxis and thymic cell line apoptosis. The protein is C-C chemokine receptor type 8 (CCR8) of Macaca mulatta (Rhesus macaque).